A 730-amino-acid chain; its full sequence is Translation factor GUF1 homolog, mitochondrial (730 aa).

The tr-type G domain maps to 106–289 (ELIRNFCIIA…AVVVSIPPPK (184 aa)). GTP contacts are provided by residues 115 to 122 (AHVDHGKS), 182 to 186 (DTPGH), and 236 to 239 (NKID).

It belongs to the TRAFAC class translation factor GTPase superfamily. Classic translation factor GTPase family. LepA subfamily.

It is found in the mitochondrion inner membrane. The catalysed reaction is GTP + H2O = GDP + phosphate + H(+). Functionally, promotes mitochondrial protein synthesis. May act as a fidelity factor of the translation reaction, by catalyzing a one-codon backward translocation of tRNAs on improperly translocated ribosomes. Binds to mitochondrial ribosomes in a GTP-dependent manner. This chain is Translation factor GUF1 homolog, mitochondrial, found in Theileria annulata.